Reading from the N-terminus, the 143-residue chain is Heat shock protein Hsp-16.48/Hsp-16.49 (143 aa).

The region spanning 35–140 is the sHSP domain; the sequence is HNSFNFSDNI…SSRSIPINFV (106 aa).

This sequence belongs to the small heat shock protein (HSP20) family.

The polypeptide is Heat shock protein Hsp-16.48/Hsp-16.49 (hsp-16.48) (Caenorhabditis elegans).